The following is a 328-amino-acid chain: MTHRFPRSRTALAVALMAGFAMSAQARVFRSADVHGDSFPTNMAVKFMGDELSKLTGGKDSIKVFGNSALGSEKDTVDQVRIGAIDMARVNGASFNEIVPESLIPSFPFLFRDVDHFRKAMYGPAGQKILDAFAAKGMIALTFYESGARSIYAKRPVRTPADMKGLKVRVQPSDLMVDEIRAMGGTPTPMPFAEVYTGLKTGLVDAAENNLPSYEETKHFEVAPDYSETQHAMTPEVLVFSKKIWDTLSPQEQAAIRKAAADSVPYYQKLWTAREASAQQAVTKGGANILPAAQVDRAAFVKAMQPLWTKYEKTPQMKQIVDEIEATK.

The signal sequence occupies residues 1-26 (MTHRFPRSRTALAVALMAGFAMSAQA). Positions 35, 73, 89, 149, 209, and 236 each coordinate beta-D-galacturonate. Beta-D-glucuronate-binding residues include H35, E73, R89, R149, N209, and E236.

The protein belongs to the bacterial solute-binding protein 7 family. In terms of assembly, the complex is comprised of an extracytoplasmic solute-binding protein and a heteromeric permease formed by two transmembrane proteins.

The protein resides in the periplasm. Functionally, solute-binding protein that binds D-galacturonate and D-glucuronate (in vitro). Probably part of a tripartite ATP-independent periplasmic (TRAP) transport system that mediates solute transport into the cytoplasm. This is Solute-binding protein Bamb_6123 from Burkholderia ambifaria (strain ATCC BAA-244 / DSM 16087 / CCUG 44356 / LMG 19182 / AMMD) (Burkholderia cepacia (strain AMMD)).